The chain runs to 363 residues: NAD(P)H-quinone oxidoreductase subunit 1, chloroplastic (363 aa).

The next 6 membrane-spanning stretches (helical) occupy residues 30 to 50 (FLPILTLVLGITIGVLVIVWL), 104 to 124 (IAVISILLSYSVIPFSYHLVL), 129 to 149 (IGVFLWIAISSIAPIGLLMSG), 248 to 268 (YSGIKFGLFYVASYLNLLVSS), 300 to 320 (VFGTTIGIFITLAKTYFFLFI), and 343 to 363 (FLLPISLGNLLLTTSFQLLSL).

Belongs to the complex I subunit 1 family. As to quaternary structure, NDH is composed of at least 16 different subunits, 5 of which are encoded in the nucleus.

The protein resides in the plastid. It is found in the chloroplast thylakoid membrane. The catalysed reaction is a plastoquinone + NADH + (n+1) H(+)(in) = a plastoquinol + NAD(+) + n H(+)(out). It carries out the reaction a plastoquinone + NADPH + (n+1) H(+)(in) = a plastoquinol + NADP(+) + n H(+)(out). Functionally, NDH shuttles electrons from NAD(P)H:plastoquinone, via FMN and iron-sulfur (Fe-S) centers, to quinones in the photosynthetic chain and possibly in a chloroplast respiratory chain. The immediate electron acceptor for the enzyme in this species is believed to be plastoquinone. Couples the redox reaction to proton translocation, and thus conserves the redox energy in a proton gradient. The chain is NAD(P)H-quinone oxidoreductase subunit 1, chloroplastic from Eucalyptus globulus subsp. globulus (Tasmanian blue gum).